A 145-amino-acid chain; its full sequence is Photosystem I reaction center subunit XI (145 aa).

3 helical membrane-spanning segments follow: residues 48 to 68 (LEIGMAHGYFLIGPFYILGPL), 75 to 95 (LLVGLFSAFGLIIILTLALTI), and 125 to 145 (IGALGGASVAYLVLNNISFFA).

It belongs to the PsaL family.

The protein localises to the plastid. It localises to the chloroplast thylakoid membrane. In Isochrysis galbana (Marine planktonic alga), this protein is Photosystem I reaction center subunit XI.